Reading from the N-terminus, the 116-residue chain is Large ribosomal subunit protein bL17 (116 aa).

The protein belongs to the bacterial ribosomal protein bL17 family. As to quaternary structure, part of the 50S ribosomal subunit. Contacts protein L32.

The chain is Large ribosomal subunit protein bL17 from Dictyoglomus turgidum (strain DSM 6724 / Z-1310).